A 313-amino-acid polypeptide reads, in one-letter code: Ribosomal RNA small subunit methyltransferase H (313 aa).

S-adenosyl-L-methionine contacts are provided by residues 35–37, Asp55, Phe79, Asp100, and Gln107; that span reads GGH.

This sequence belongs to the methyltransferase superfamily. RsmH family.

Its subcellular location is the cytoplasm. The enzyme catalyses cytidine(1402) in 16S rRNA + S-adenosyl-L-methionine = N(4)-methylcytidine(1402) in 16S rRNA + S-adenosyl-L-homocysteine + H(+). Its function is as follows. Specifically methylates the N4 position of cytidine in position 1402 (C1402) of 16S rRNA. This is Ribosomal RNA small subunit methyltransferase H from Burkholderia pseudomallei (strain 1106a).